The sequence spans 318 residues: Ribosome biogenesis protein RLP7 (318 aa).

2 disordered regions span residues 1–49 (MSQP…NRFV) and 101–121 (AGSKATSESELQDVDEEDEED). The span at 19–40 (ADRTRLEKQELAKKRKEQEEKQ) shows a compositional bias: basic and acidic residues. A compositionally biased stretch (acidic residues) spans 110–121 (ELQDVDEEDEED).

It belongs to the universal ribosomal protein uL30 family.

Its subcellular location is the nucleus. The protein localises to the nucleolus. In terms of biological role, involved in the biogenesis of the 60S ribosomal subunit. May act as a specificity factor that binds precursor rRNAs and tethers the enzymes that carry out the early 5' to 3' exonucleolytic reactions that generate the mature rRNAs. This is Ribosome biogenesis protein RLP7 (RLP7) from Kluyveromyces lactis (strain ATCC 8585 / CBS 2359 / DSM 70799 / NBRC 1267 / NRRL Y-1140 / WM37) (Yeast).